The primary structure comprises 834 residues: 5-hydroxytryptamine receptor 2A (834 aa).

At 1–230 (MAHETSFNDA…TQLLRMAVTS (230 aa)) the chain is on the extracellular side. The disordered stretch occupies residues 56–75 (TDDGQLEDTNNNNNSKRYYS). Residues N68, N97, N161, N175, N183, N194, N203, and N209 are each glycosylated (N-linked (GlcNAc...) asparagine). Residues 231–253 (VLLGLMILVTIIGNVFVIAAIIL) traverse the membrane as a helical segment. Topologically, residues 254–263 (ERNLQNVANY) are cytoplasmic. A helical membrane pass occupies residues 264–285 (LVASLAVADLFVACLVMPLGAV). The Extracellular segment spans residues 286-300 (YEISQGWILGPELCD). The cysteines at positions 299 and 378 are disulfide-linked. Residues 301 to 322 (IWTSCDVLCCTASILHLVAIAV) form a helical membrane-spanning segment. The Cytoplasmic segment spans residues 323–341 (DRYWAVTNIDYIHSRTSNR). A helical membrane pass occupies residues 342 to 364 (VFMMIFCVWTAAVIVSLAPQFGW). The Extracellular portion of the chain corresponds to 365-391 (KDPDYLQRIEQQKCMVSQDVSYQVFAT). Residues 392 to 413 (CCTFYVPLLVILALYWKIYQTA) form a helical membrane-spanning segment. The Cytoplasmic segment spans residues 414-752 (RKRIHRRRPR…AKRERKAAKT (339 aa)). Disordered stretches follow at residues 420-442 (RRPR…ATDT), 460-516 (KTGS…STSG), 531-599 (QQGK…SEDQ), 617-640 (LEQV…TSNA), and 674-743 (STLT…TLEA). 2 stretches are compositionally biased toward polar residues: residues 482 to 502 (GNST…SNVD) and 532 to 542 (QGKSTAKSSAA). Residues 551–564 (RQEDDGQRPEHGEQ) show a composition bias toward basic and acidic residues. Positions 565–575 (EDREELEDQDE) are enriched in acidic residues. The segment covering 582–593 (TTATSATTAAGT) has biased composition (low complexity). Residues 674-694 (STLTSCNQSHPLCGTANESPS) are compositionally biased toward polar residues. Positions 702 to 723 (QPTTPQQQPHQQAHQQQQQQQQ) are enriched in low complexity. A helical membrane pass occupies residues 753-776 (LAIITGAFVVCWLPFFVMALTMPL). At 777-785 (CAACQISDS) the chain is on the extracellular side. The helical transmembrane segment at 786 to 808 (VASLFLWLGYFNSTLNPVIYTIF) threads the bilayer. The Cytoplasmic segment spans residues 809–834 (SPEFRQAFKRILFGGHRPVHYRSGKL).

The protein belongs to the G-protein coupled receptor 1 family.

The protein localises to the cell membrane. In terms of biological role, this is one of the several different receptors for 5-hydroxytryptamine (serotonin), a biogenic hormone that functions as a neurotransmitter, a hormone, and a mitogen. The activity of this receptor is mediated by G proteins which inhibit adenylate cyclase. This is 5-hydroxytryptamine receptor 2A (5-HT1A) from Drosophila melanogaster (Fruit fly).